Here is a 98-residue protein sequence, read N- to C-terminus: NADH-ubiquinone oxidoreductase chain 4L (98 aa).

A run of 3 helical transmembrane segments spans residues 2 to 22, 26 to 46, and 61 to 81; these read SPIYINLMMAFIFSLLGTLLF, LMSTLLCLEGMMLSLFIMVTS, and ITMLVFGACEAAIGLALLVMI.

This sequence belongs to the complex I subunit 4L family. As to quaternary structure, core subunit of respiratory chain NADH dehydrogenase (Complex I) which is composed of 45 different subunits.

Its subcellular location is the mitochondrion inner membrane. The catalysed reaction is a ubiquinone + NADH + 5 H(+)(in) = a ubiquinol + NAD(+) + 4 H(+)(out). In terms of biological role, core subunit of the mitochondrial membrane respiratory chain NADH dehydrogenase (Complex I) which catalyzes electron transfer from NADH through the respiratory chain, using ubiquinone as an electron acceptor. Part of the enzyme membrane arm which is embedded in the lipid bilayer and involved in proton translocation. This is NADH-ubiquinone oxidoreductase chain 4L (MT-ND4L) from Nephelomys albigularis (Tomes's rice rat).